The following is a 206-amino-acid chain: Small ribosomal subunit protein uS4 (206 aa).

Residues 96 to 156 (SRLDNVVYRM…EKSKKQLRIQ (61 aa)) enclose the S4 RNA-binding domain.

Belongs to the universal ribosomal protein uS4 family. As to quaternary structure, part of the 30S ribosomal subunit. Contacts protein S5. The interaction surface between S4 and S5 is involved in control of translational fidelity.

In terms of biological role, one of the primary rRNA binding proteins, it binds directly to 16S rRNA where it nucleates assembly of the body of the 30S subunit. With S5 and S12 plays an important role in translational accuracy. The sequence is that of Small ribosomal subunit protein uS4 from Francisella philomiragia subsp. philomiragia (strain ATCC 25017 / CCUG 19701 / FSC 153 / O#319-036).